We begin with the raw amino-acid sequence, 257 residues long: Phycoerythrobilin:ferredoxin oxidoreductase (257 aa).

The protein belongs to the HY2 family.

It carries out the reaction (3Z)-phycoerythrobilin + oxidized 2[4Fe-4S]-[ferredoxin] = 15,16-dihydrobiliverdin + reduced 2[4Fe-4S]-[ferredoxin] + 2 H(+). Functionally, catalyzes the two-electron reduction of the C2 and C3(1) diene system of 15,16-dihydrobiliverdin. The polypeptide is Phycoerythrobilin:ferredoxin oxidoreductase (Prochlorococcus marinus (strain MIT 9303)).